A 221-amino-acid polypeptide reads, in one-letter code: Small ribosomal subunit protein eS1 (221 aa).

It belongs to the eukaryotic ribosomal protein eS1 family.

This Pyrobaculum aerophilum (strain ATCC 51768 / DSM 7523 / JCM 9630 / CIP 104966 / NBRC 100827 / IM2) protein is Small ribosomal subunit protein eS1.